A 399-amino-acid polypeptide reads, in one-letter code: Elongation factor Tu (399 aa).

A tr-type G domain is found at 10 to 204 (KPHVNIGTIG…AVDTSIPEPE (195 aa)). Positions 19–26 (GHVDHGKT) are G1. Residue 19-26 (GHVDHGKT) coordinates GTP. Position 26 (Thr-26) interacts with Mg(2+). The segment at 60–64 (GITIN) is G2. The segment at 81–84 (DCPG) is G3. Residues 81–85 (DCPGH) and 136–139 (NKCD) contribute to the GTP site. Residues 136 to 139 (NKCD) are G4. The G5 stretch occupies residues 174–176 (SGL).

It belongs to the TRAFAC class translation factor GTPase superfamily. Classic translation factor GTPase family. EF-Tu/EF-1A subfamily. Monomer.

It localises to the cytoplasm. It catalyses the reaction GTP + H2O = GDP + phosphate + H(+). GTP hydrolase that promotes the GTP-dependent binding of aminoacyl-tRNA to the A-site of ribosomes during protein biosynthesis. The sequence is that of Elongation factor Tu from Prochlorococcus marinus (strain MIT 9303).